Reading from the N-terminus, the 168-residue chain is Disulfide bond formation protein B 2 (168 aa).

Topologically, residues 1-9 (MLPARLRTF) are cytoplasmic. A helical transmembrane segment spans residues 10 to 26 (FLPACLVALAVLVASFR). Residues 27–44 (LENTVGLMPCPLCLSQRL) are Periplasmic-facing. A disulfide bridge links Cys36 with Cys39. The helical transmembrane segment at 45–61 (LLGGYALLCFAAVLQAP) threads the bilayer. The Cytoplasmic segment spans residues 62-67 (GTRGIL). The chain crosses the membrane as a helical span at residues 68–85 (RYARLALGCSLAGALLAA). The Periplasmic segment spans residues 86-140 (RHVWLQGAEGVNEVCPVPIGRVFEQSWSEAARQLLLGGPDCRSLAWSFLDLTLPE). A disulfide bond links Cys100 and Cys126. The helical transmembrane segment at 141–159 (WSLLAFLLLAVLPLSCLLA) threads the bilayer. Over 160–168 (YRFRTLART) the chain is Cytoplasmic.

The protein belongs to the DsbB family.

Its subcellular location is the cell inner membrane. Its function is as follows. Required for disulfide bond formation in some periplasmic proteins. Acts by oxidizing the DsbA protein. The polypeptide is Disulfide bond formation protein B 2 (dsbB2) (Pseudomonas putida (strain ATCC 47054 / DSM 6125 / CFBP 8728 / NCIMB 11950 / KT2440)).